A 447-amino-acid chain; its full sequence is Exodeoxyribonuclease 7 large subunit (447 aa).

It belongs to the XseA family. In terms of assembly, heterooligomer composed of large and small subunits.

It localises to the cytoplasm. The catalysed reaction is Exonucleolytic cleavage in either 5'- to 3'- or 3'- to 5'-direction to yield nucleoside 5'-phosphates.. In terms of biological role, bidirectionally degrades single-stranded DNA into large acid-insoluble oligonucleotides, which are then degraded further into small acid-soluble oligonucleotides. The protein is Exodeoxyribonuclease 7 large subunit of Geobacter sulfurreducens (strain ATCC 51573 / DSM 12127 / PCA).